Here is a 500-residue protein sequence, read N- to C-terminus: NAD(P)H-quinone oxidoreductase chain 4, chloroplastic (500 aa).

A run of 14 helical transmembrane segments spans residues 3–23, 37–57, 87–107, 113–130, 134–154, 167–187, 208–228, 242–262, 272–292, 305–325, 330–350, 386–406, 416–436, and 462–482; these read FFPWLTIIVVLPISAGSLIFF, ICICLLELLLITYVFCYHFQL, IGPILLTGFITTLATLAAWPI, LFHFLMLAMYSGQIGSFS, LLLFFIMWELELIPVYLLLSM, FILYTAGGSIFLLMGVLGMGL, ALEIMFYFGFLIAYAVKSPII, HYSTCMLLAGILLKMGAYGLV, AHSIFSPWLMIVGTIQIIYAA, IAYSSVSHMGFTIIGIGSITD, GAVLQIISHGFIGAALFFLAG, LALPGMSGFVAELIVFFGIIT, ILITFVMAIGMILTPIYSLSM, and LFVSISIFLPVIGIGIYPDFV.

The protein belongs to the complex I subunit 4 family.

Its subcellular location is the plastid. It localises to the chloroplast thylakoid membrane. The catalysed reaction is a plastoquinone + NADH + (n+1) H(+)(in) = a plastoquinol + NAD(+) + n H(+)(out). It carries out the reaction a plastoquinone + NADPH + (n+1) H(+)(in) = a plastoquinol + NADP(+) + n H(+)(out). The protein is NAD(P)H-quinone oxidoreductase chain 4, chloroplastic of Platanus occidentalis (Sycamore).